A 342-amino-acid chain; its full sequence is Ion-translocating oxidoreductase complex subunit D (342 aa).

The next 3 membrane-spanning stretches (helical) occupy residues 42-62 (GSVI…ALFL), 68-90 (NIAF…LALP), and 124-144 (AMVG…QWLA). Thr-171 bears the FMN phosphoryl threonine mark. A run of 5 helical transmembrane segments spans residues 200–220 (FAGL…LYLI), 227–247 (WHIP…AWLI), 252–272 (FADP…FFIA), 286–306 (LVYA…GGYP), and 308–328 (AVAF…YYTQ).

Belongs to the NqrB/RnfD family. The complex is composed of six subunits: RnfA, RnfB, RnfC, RnfD, RnfE and RnfG. FMN serves as cofactor.

Its subcellular location is the cell inner membrane. Its function is as follows. Part of a membrane-bound complex that couples electron transfer with translocation of ions across the membrane. This Alcanivorax borkumensis (strain ATCC 700651 / DSM 11573 / NCIMB 13689 / SK2) protein is Ion-translocating oxidoreductase complex subunit D.